A 447-amino-acid chain; its full sequence is MLENIRDAVRKFLTGSTPYEKAVDEFIKELQKSLISSDVNVKLVFSLTAKIKERLNKEKPPSVLERKEWFISIVYDELSKLFGGDKEPNVNPTKLPFIIMLVGVQGSGKTTTAGKLAYFYKRRGYKVGLVAADVYRPAAYDQLLQLGNQIGVPVYGEPNNQNAIEIAKKGVDTFVKNKMDIIIVDTAGRHGYGEETKLLEEMKEIYEALKPDDVILVIDASIGQKAYDLASRFHQASPIGSIIITKMDGTAKGGGALSAVAATGATIKFIGTGEKIDELEIFNAKRYVSRILGMGDIESILEKVKGLEEYEKIQKKMEDVMEGKGKLTLRDVYAQIMALRKMGPLSKVLQHIPGLGVMLPTPSEDQLKLGEEKIRRWLAALNSMTYKELENPSIIDKSRMRRIAEGSGLEVEDVRELLEWYNNMNKLLKMVKRRRGSIDKLFGGKIG.

GTP contacts are provided by residues 103–110 (GVQGSGKT), 185–189 (DTAGR), and 245–248 (TKMD).

Belongs to the GTP-binding SRP family. SRP54 subfamily. In terms of assembly, part of the signal recognition particle protein translocation system, which is composed of SRP and FtsY. Archaeal SRP consists of a 7S RNA molecule of 300 nucleotides and two protein subunits: SRP54 and SRP19.

It localises to the cytoplasm. The enzyme catalyses GTP + H2O = GDP + phosphate + H(+). In terms of biological role, involved in targeting and insertion of nascent membrane proteins into the cytoplasmic membrane. Binds to the hydrophobic signal sequence of the ribosome-nascent chain (RNC) as it emerges from the ribosomes. The SRP-RNC complex is then targeted to the cytoplasmic membrane where it interacts with the SRP receptor FtsY. The chain is Signal recognition particle 54 kDa protein from Saccharolobus islandicus (strain Y.G.57.14 / Yellowstone #1) (Sulfolobus islandicus).